A 398-amino-acid polypeptide reads, in one-letter code: Substance-K receptor (398 aa).

Over 1 to 32 (MGTCDIVTEANISSGPESNTTGITAFSMPSWQ) the chain is Extracellular. N-linked (GlcNAc...) asparagine glycosylation is found at Asn11 and Asn19. A helical membrane pass occupies residues 33–56 (LALWATAYLALVLVAVTGNAIVIW). The Cytoplasmic portion of the chain corresponds to 57-69 (IILAHRRMRTVTN). Residues 70-90 (YFIVNLALADLCMAAFNAAFN) traverse the membrane as a helical segment. The Extracellular segment spans residues 91 to 107 (FVYASHNIWYFGRAFCY). Cysteines 106 and 181 form a disulfide. A helical membrane pass occupies residues 108-129 (FQNLFPITAMFVSIYSMTAIAA). At 130–149 (DRYMAIVHPFQPRLSAPSTK) the chain is on the cytoplasmic side. The chain crosses the membrane as a helical span at residues 150–170 (AVIAGIWLVALALASPQCFYS). Residues 171–196 (TVTMDQGATKCVVAWPEDSGGKTLLL) are Extracellular-facing. The helical transmembrane segment at 197 to 218 (YHLVVIALIYFLPLAVMFVAYS) threads the bilayer. Over 219–251 (VIGLTLWRRAVPGHQAHGANLRHLQAMKKFVKT) the chain is Cytoplasmic. A helical membrane pass occupies residues 252-272 (MVLVVLTFAICWLPYHLYFIL). Topologically, residues 273–290 (GSFQEDIYCHKFIQQVYL) are extracellular. A helical membrane pass occupies residues 291–310 (ALFWLAMSSTMYNPIIYCCL). Over 311–398 (NHRFRSGFRL…LAPTKTHVEI (88 aa)) the chain is Cytoplasmic. The S-palmitoyl cysteine moiety is linked to residue Cys324.

The protein belongs to the G-protein coupled receptor 1 family.

Its subcellular location is the cell membrane. Functionally, this is a receptor for the tachykinin neuropeptide substance K (neurokinin A). It is associated with G proteins that activate a phosphatidylinositol-calcium second messenger system. The rank order of affinity of this receptor to tachykinins is: substance K &gt; neuromedin-K &gt; substance P. This Homo sapiens (Human) protein is Substance-K receptor (TACR2).